Here is a 660-residue protein sequence, read N- to C-terminus: MSAIESVMQEHRVFNPPEAFASQAAIPSMDAYRALCDEAERDYEGFWARYARELLHWNKPFTKVLDESNAPFYKWFEDGELNASYNCLDRNLQNGNADKVAIVFEADDGTVTRVTYRELHAKVCRLANGLKTLGIRKGDRVVIYMPMSVEGVAAMQACARLGATHSVVFGGFSAKSLQERLVDVGAVALITADEQMRGGKALPLKAIADDALALGGCEAVKNVIVYRRTGGNVGWTEGRDRWLDDVCANQPDTCEAEPVGAEHPLFVLYTSGSTGKPKGVQHSTGGYLLWALMTMKWTFDIKPDDLFWCTADIGWVTGHTYIAYGPLAAGATQVVFEGVPTYPNAGRFWDMIARHKVSIFYTAPTAIRSLIKAAEADEKIHPKQYDLSSLRLLGTVGEPINPEAWMWYYKNVGNENCPIVDTFWQTETGGHMITPLPGATPLVPGSCTLPLPGIMAAIVDETGHDVPNGSGGILVVKRPWPAMIRTIWGDPERFKKSYFPEELGGKLYLAGDGSIRDKDTGYFTIMGRIDDVLNVSGHRMGTMEIESALVANPLVAEAAVVGRPDDMTGEAICAFVVLKRSRPSGEEAAKLATELRNWVGKEIGPIAKPKDIRFGDNLPKTRSGKIMRRLLRSLAKGEEITQDTSTLENPAILEQLKQAQ.

CoA contacts are provided by residues 197–200 (RGGK) and T317. ATP-binding positions include 397–399 (GEP), 421–426 (DTFWQT), D512, and R528. S536 is a binding site for CoA. R539 is an ATP binding site. 2 residues coordinate Mg(2+): V550 and V555. N6-acetyllysine is present on K625.

This sequence belongs to the ATP-dependent AMP-binding enzyme family. The cofactor is Mg(2+). Post-translationally, acetylated. Deacetylation by the SIR2-homolog deacetylase activates the enzyme.

The enzyme catalyses acetate + ATP + CoA = acetyl-CoA + AMP + diphosphate. Its function is as follows. Catalyzes the conversion of acetate into acetyl-CoA (AcCoA), an essential intermediate at the junction of anabolic and catabolic pathways. AcsA undergoes a two-step reaction. In the first half reaction, AcsA combines acetate with ATP to form acetyl-adenylate (AcAMP) intermediate. In the second half reaction, it can then transfer the acetyl group from AcAMP to the sulfhydryl group of CoA, forming the product AcCoA. This Cupriavidus taiwanensis (strain DSM 17343 / BCRC 17206 / CCUG 44338 / CIP 107171 / LMG 19424 / R1) (Ralstonia taiwanensis (strain LMG 19424)) protein is Acetyl-coenzyme A synthetase.